We begin with the raw amino-acid sequence, 85 residues long: Large ribosomal subunit protein bL27 (85 aa).

A disordered region spans residues 1 to 22; that stretch reads MAHKKAGGSTRNGRDSESKRLG.

The protein belongs to the bacterial ribosomal protein bL27 family.

The polypeptide is Large ribosomal subunit protein bL27 (Vibrio parahaemolyticus serotype O3:K6 (strain RIMD 2210633)).